The chain runs to 412 residues: CCA-adding enzyme (412 aa).

The ATP site is built by Gly8 and Arg11. The CTP site is built by Gly8 and Arg11. Residues Asp21 and Asp23 each coordinate Mg(2+). ATP contacts are provided by Arg91, Arg137, and Arg140. Positions 91, 137, and 140 each coordinate CTP.

This sequence belongs to the tRNA nucleotidyltransferase/poly(A) polymerase family. Bacterial CCA-adding enzyme type 2 subfamily. The cofactor is Mg(2+).

It carries out the reaction a tRNA precursor + 2 CTP + ATP = a tRNA with a 3' CCA end + 3 diphosphate. It catalyses the reaction a tRNA with a 3' CCA end + 2 CTP + ATP = a tRNA with a 3' CCACCA end + 3 diphosphate. Its function is as follows. Catalyzes the addition and repair of the essential 3'-terminal CCA sequence in tRNAs without using a nucleic acid template. Adds these three nucleotides in the order of C, C, and A to the tRNA nucleotide-73, using CTP and ATP as substrates and producing inorganic pyrophosphate. tRNA 3'-terminal CCA addition is required both for tRNA processing and repair. Also involved in tRNA surveillance by mediating tandem CCA addition to generate a CCACCA at the 3' terminus of unstable tRNAs. While stable tRNAs receive only 3'-terminal CCA, unstable tRNAs are marked with CCACCA and rapidly degraded. This Buchnera aphidicola subsp. Schizaphis graminum (strain Sg) protein is CCA-adding enzyme.